Reading from the N-terminus, the 349-residue chain is Biotin synthase (349 aa).

The region spanning Pro-70–Arg-295 is the Radical SAM core domain. Positions 85, 89, and 92 each coordinate [4Fe-4S] cluster. [2Fe-2S] cluster is bound by residues Cys-128, Cys-161, Cys-220, and Arg-290.

The protein belongs to the radical SAM superfamily. Biotin synthase family. Homodimer. It depends on [4Fe-4S] cluster as a cofactor. [2Fe-2S] cluster serves as cofactor.

It catalyses the reaction (4R,5S)-dethiobiotin + (sulfur carrier)-SH + 2 reduced [2Fe-2S]-[ferredoxin] + 2 S-adenosyl-L-methionine = (sulfur carrier)-H + biotin + 2 5'-deoxyadenosine + 2 L-methionine + 2 oxidized [2Fe-2S]-[ferredoxin]. The protein operates within cofactor biosynthesis; biotin biosynthesis; biotin from 7,8-diaminononanoate: step 2/2. Functionally, catalyzes the conversion of dethiobiotin (DTB) to biotin by the insertion of a sulfur atom into dethiobiotin via a radical-based mechanism. The chain is Biotin synthase from Mycobacterium bovis (strain ATCC BAA-935 / AF2122/97).